Reading from the N-terminus, the 125-residue chain is Small ribosomal subunit protein uS13 (125 aa).

The tract at residues 90–125 is disordered; that stretch reads QRHRKGLPVRGQRTKTNARTRKGPKRTVAGKKKATK.

It belongs to the universal ribosomal protein uS13 family. In terms of assembly, part of the 30S ribosomal subunit. Forms a loose heterodimer with protein S19. Forms two bridges to the 50S subunit in the 70S ribosome.

In terms of biological role, located at the top of the head of the 30S subunit, it contacts several helices of the 16S rRNA. In the 70S ribosome it contacts the 23S rRNA (bridge B1a) and protein L5 of the 50S subunit (bridge B1b), connecting the 2 subunits; these bridges are implicated in subunit movement. Contacts the tRNAs in the A and P-sites. The protein is Small ribosomal subunit protein uS13 of Bifidobacterium longum subsp. infantis (strain ATCC 15697 / DSM 20088 / JCM 1222 / NCTC 11817 / S12).